The following is a 382-amino-acid chain: Alkanesulfonate monooxygenase (382 aa).

This sequence belongs to the SsuD family.

It catalyses the reaction an alkanesulfonate + FMNH2 + O2 = an aldehyde + FMN + sulfite + H2O + 2 H(+). Functionally, catalyzes the desulfonation of aliphatic sulfonates. The protein is Alkanesulfonate monooxygenase of Pseudomonas putida (strain ATCC 700007 / DSM 6899 / JCM 31910 / BCRC 17059 / LMG 24140 / F1).